The chain runs to 146 residues: uncharacterized protein (146 aa).

This is an uncharacterized protein from Acidianus filamentous virus 2 (isolate Italy/Pozzuoli) (AFV-2).